The primary structure comprises 254 residues: 3-dehydroquinate dehydratase (254 aa).

3-dehydroquinate contacts are provided by residues 47–49 and Arg-83; that span reads EWR. His-144 acts as the Proton donor/acceptor in catalysis. Lys-171 serves as the catalytic Schiff-base intermediate with substrate. Arg-214, Ser-233, and Gln-237 together coordinate 3-dehydroquinate.

The protein belongs to the type-I 3-dehydroquinase family. Homodimer.

It carries out the reaction 3-dehydroquinate = 3-dehydroshikimate + H2O. It functions in the pathway metabolic intermediate biosynthesis; chorismate biosynthesis; chorismate from D-erythrose 4-phosphate and phosphoenolpyruvate: step 3/7. Functionally, involved in the third step of the chorismate pathway, which leads to the biosynthesis of aromatic amino acids. Catalyzes the cis-dehydration of 3-dehydroquinate (DHQ) and introduces the first double bond of the aromatic ring to yield 3-dehydroshikimate. This chain is 3-dehydroquinate dehydratase, found in Clostridium botulinum (strain Eklund 17B / Type B).